Here is a 399-residue protein sequence, read N- to C-terminus: Tryptophan synthase beta chain (399 aa).

An N6-(pyridoxal phosphate)lysine modification is found at lysine 92.

The protein belongs to the TrpB family. As to quaternary structure, tetramer of two alpha and two beta chains. Pyridoxal 5'-phosphate serves as cofactor.

It carries out the reaction (1S,2R)-1-C-(indol-3-yl)glycerol 3-phosphate + L-serine = D-glyceraldehyde 3-phosphate + L-tryptophan + H2O. It functions in the pathway amino-acid biosynthesis; L-tryptophan biosynthesis; L-tryptophan from chorismate: step 5/5. The beta subunit is responsible for the synthesis of L-tryptophan from indole and L-serine. The sequence is that of Tryptophan synthase beta chain from Bordetella bronchiseptica (strain ATCC BAA-588 / NCTC 13252 / RB50) (Alcaligenes bronchisepticus).